The primary structure comprises 354 residues: Protein Wnt-11 (354 aa).

The first 24 residues, 1-24 (MKPSPQFLLAAFLSLILQTGICYG), serve as a signal peptide directing secretion. N40 and N90 each carry an N-linked (GlcNAc...) asparagine glycan. Cystine bridges form between C80/C91, C130/C138, C140/C157, C209/C223, C211/C218, C283/C314, C299/C309, C313/C353, C329/C344, C331/C341, and C336/C337. S215 carries the O-palmitoleoyl serine; by PORCN lipid modification. N-linked (GlcNAc...) asparagine glycosylation is found at N300 and N304.

Belongs to the Wnt family. Post-translationally, palmitoleoylation is required for efficient binding to frizzled receptors. Depalmitoleoylation leads to Wnt signaling pathway inhibition.

The protein localises to the secreted. The protein resides in the extracellular space. It localises to the extracellular matrix. Its function is as follows. Ligand for members of the frizzled family of seven transmembrane receptors. May play a role in the formation of dermal structure, both limb and feather buds. Is likely to signal over only few cell diameters. The sequence is that of Protein Wnt-11 (WNT11) from Coturnix japonica (Japanese quail).